Reading from the N-terminus, the 224-residue chain is Coiled-coil domain-containing protein 43 (224 aa).

Lys-95 is covalently cross-linked (Glycyl lysine isopeptide (Lys-Gly) (interchain with G-Cter in SUMO1)). 2 coiled-coil regions span residues 121–145 and 177–218; these read SEEE…EDEA and RKLE…KRTQ. The span at 138–149 shows a compositional bias: acidic residues; sequence VTDEEDEADEKD. Disordered regions lie at residues 138–157 and 176–224; these read VTDE…TTMN and ARKL…ERKR. At Thr-139 the chain carries Phosphothreonine. Residues 176–211 show a composition bias toward basic and acidic residues; it reads ARKLERDSLRDESQRKKEQDKLQRERDKLAKQERKE. Residues 212 to 224 are compositionally biased toward basic residues; it reads KEKKRTQRGERKR.

The protein belongs to the CCDC43 family.

The polypeptide is Coiled-coil domain-containing protein 43 (CCDC43) (Homo sapiens (Human)).